Consider the following 80-residue polypeptide: Acyl carrier protein (80 aa).

In terms of domain architecture, Carrier spans 4–79; sequence QEIFEKVKAV…DAVEYIKAKL (76 aa). At S39 the chain carries O-(pantetheine 4'-phosphoryl)serine.

This sequence belongs to the acyl carrier protein (ACP) family. Post-translationally, 4'-phosphopantetheine is transferred from CoA to a specific serine of apo-ACP by AcpS. This modification is essential for activity because fatty acids are bound in thioester linkage to the sulfhydryl of the prosthetic group.

The protein localises to the cytoplasm. The protein operates within lipid metabolism; fatty acid biosynthesis. In terms of biological role, carrier of the growing fatty acid chain in fatty acid biosynthesis. The protein is Acyl carrier protein of Thermus thermophilus (strain ATCC BAA-163 / DSM 7039 / HB27).